The sequence spans 310 residues: Olfactory receptor 8G3 (310 aa).

Topologically, residues 1-25 (MDPGNHSSVTESILAGLSEQPELQL) are extracellular. N-linked (GlcNAc...) asparagine glycosylation is present at Asn-5. The helical transmembrane segment at 26–46 (RLFLLFLGICVVTVVGNLGMI) threads the bilayer. Residues 47-54 (TLIGLSSH) are Cytoplasmic-facing. A helical membrane pass occupies residues 55–75 (LHTPMYYFLSSLSFIDFCHST). Over 76–99 (VITPKMLVNFATEKNIISYPECMA) the chain is Extracellular. Cys-97 and Cys-189 form a disulfide bridge. The chain crosses the membrane as a helical span at residues 100-120 (QLYLFSIFAIAECHMLAAMAY). Topologically, residues 121 to 139 (DCYVAICSPLLYNVIMSYH) are cytoplasmic. A helical transmembrane segment spans residues 140–160 (HCFWLTVGVYILGILGSTIHT). Topologically, residues 161-197 (SFMLRLFLCKTNVINHYFCDLFPLLGLSCSSTYINEL) are extracellular. Residues 198 to 217 (LVLVLSAFNILMPALTILAS) traverse the membrane as a helical segment. At 218 to 237 (YIFIIASILRIHSTEGRSKA) the chain is on the cytoplasmic side. Residues 238-258 (FSTCSSHILAVAVFFGSAAFM) traverse the membrane as a helical segment. The Extracellular portion of the chain corresponds to 259–271 (YLQPSSVSSMDQR). Residues 272–292 (KVSSVFYTTIVPMLNPLIYSL) traverse the membrane as a helical segment. The Cytoplasmic portion of the chain corresponds to 293-310 (RNKDVKLAVKKILHQTAC).

It belongs to the G-protein coupled receptor 1 family.

It is found in the cell membrane. In terms of biological role, odorant receptor. This chain is Olfactory receptor 8G3, found in Homo sapiens (Human).